Here is a 126-residue protein sequence, read N- to C-terminus: Large ribosomal subunit protein bL19 (126 aa).

It belongs to the bacterial ribosomal protein bL19 family.

Its function is as follows. This protein is located at the 30S-50S ribosomal subunit interface and may play a role in the structure and function of the aminoacyl-tRNA binding site. This chain is Large ribosomal subunit protein bL19, found in Bordetella petrii (strain ATCC BAA-461 / DSM 12804 / CCUG 43448).